Here is a 691-residue protein sequence, read N- to C-terminus: Histone-lysine N-methyltransferase Set8 (691 aa).

Disordered regions lie at residues 1–22, 211–234, 345–381, 422–450, and 484–516; these read MIMVRRRARPAKETGGGSAAAA, RSGLRDSHSSSHSSSSSGGASATT, PAAGGGAGAAARRRKPATPHRILCPSPIKTLPRGDGG, SRRRLNQPKPQAPYQPQQPQPPPGTQPTN, and APAKPRAALTKGSKTKTGSKIQPGPLPLAATNG. The segment covering 220-232 has biased composition (low complexity); the sequence is SSHSSSSSGGASA. Positions 431–446 are enriched in pro residues; that stretch reads PQAPYQPQQPQPPPGT. A compositionally biased stretch (low complexity) spans 484–503; that stretch reads APAKPRAALTKGSKTKTGSK. The SET domain maps to 555–676; sequence EGLQVRNFMG…PGEELTYDYG (122 aa). S-adenosyl-L-methionine contacts are provided by residues 565–567, tyrosine 610, and 637–638; these read KGR and NH.

Belongs to the class V-like SAM-binding methyltransferase superfamily. Histone-lysine methyltransferase family. PR/SET subfamily.

The protein localises to the nucleus. Its subcellular location is the chromosome. The catalysed reaction is L-lysyl(20)-[histone H4] + S-adenosyl-L-methionine = N(6)-methyl-L-lysyl(20)-[histone H4] + S-adenosyl-L-homocysteine + H(+). In terms of biological role, histone methyltransferase that specifically monomethylates 'Lys-20' of histone H4. H4 'Lys-20' monomethylation is enriched during mitosis and represents a specific tag for epigenetic transcriptional repression. Mainly functions in euchromatin regions, thereby playing a central role in the silencing of euchromatic genes. Required for cell proliferation, possibly by contributing to the maintenance of proper higher-order structure of DNA and chromosome condensation during mitosis. The protein is Histone-lysine N-methyltransferase Set8 of Drosophila pseudoobscura pseudoobscura (Fruit fly).